A 398-amino-acid polypeptide reads, in one-letter code: Phosphoglycerate kinase (398 aa).

Substrate-binding positions include 23–25 (DLN), Arg-38, 61–64 (HFGR), Arg-120, and Arg-153. Residues Lys-203, Glu-325, and 355–358 (GGDT) each bind ATP.

Belongs to the phosphoglycerate kinase family. Monomer.

The protein resides in the cytoplasm. The catalysed reaction is (2R)-3-phosphoglycerate + ATP = (2R)-3-phospho-glyceroyl phosphate + ADP. It functions in the pathway carbohydrate degradation; glycolysis; pyruvate from D-glyceraldehyde 3-phosphate: step 2/5. The protein is Phosphoglycerate kinase of Mesorhizobium japonicum (strain LMG 29417 / CECT 9101 / MAFF 303099) (Mesorhizobium loti (strain MAFF 303099)).